Here is a 68-residue protein sequence, read N- to C-terminus: ATP synthase subunit c (68 aa).

The next 2 membrane-spanning stretches (helical) occupy residues 5 to 25 (AAAI…GMIV) and 47 to 67 (FIGV…AFMV).

It belongs to the ATPase C chain family. In terms of assembly, F-type ATPases have 2 components, F(1) - the catalytic core - and F(0) - the membrane proton channel. F(1) has five subunits: alpha(3), beta(3), gamma(1), delta(1), epsilon(1). F(0) has three main subunits: a(1), b(2) and c(10-14). The alpha and beta chains form an alternating ring which encloses part of the gamma chain. F(1) is attached to F(0) by a central stalk formed by the gamma and epsilon chains, while a peripheral stalk is formed by the delta and b chains.

It localises to the cell membrane. Functionally, f(1)F(0) ATP synthase produces ATP from ADP in the presence of a proton or sodium gradient. F-type ATPases consist of two structural domains, F(1) containing the extramembraneous catalytic core and F(0) containing the membrane proton channel, linked together by a central stalk and a peripheral stalk. During catalysis, ATP synthesis in the catalytic domain of F(1) is coupled via a rotary mechanism of the central stalk subunits to proton translocation. Key component of the F(0) channel; it plays a direct role in translocation across the membrane. A homomeric c-ring of between 10-14 subunits forms the central stalk rotor element with the F(1) delta and epsilon subunits. The polypeptide is ATP synthase subunit c (Oceanobacillus iheyensis (strain DSM 14371 / CIP 107618 / JCM 11309 / KCTC 3954 / HTE831)).